Here is a 366-residue protein sequence, read N- to C-terminus: tRNA/tmRNA (uracil-C(5))-methyltransferase (366 aa).

Residues Gln190, Tyr218, Asn223, Glu239, and Asp299 each contribute to the S-adenosyl-L-methionine site. The active-site Nucleophile is Cys324. Glu358 (proton acceptor) is an active-site residue.

It belongs to the class I-like SAM-binding methyltransferase superfamily. RNA M5U methyltransferase family. TrmA subfamily.

The catalysed reaction is uridine(54) in tRNA + S-adenosyl-L-methionine = 5-methyluridine(54) in tRNA + S-adenosyl-L-homocysteine + H(+). The enzyme catalyses uridine(341) in tmRNA + S-adenosyl-L-methionine = 5-methyluridine(341) in tmRNA + S-adenosyl-L-homocysteine + H(+). Functionally, dual-specificity methyltransferase that catalyzes the formation of 5-methyluridine at position 54 (m5U54) in all tRNAs, and that of position 341 (m5U341) in tmRNA (transfer-mRNA). The chain is tRNA/tmRNA (uracil-C(5))-methyltransferase from Cronobacter sakazakii (strain ATCC BAA-894) (Enterobacter sakazakii).